Reading from the N-terminus, the 343-residue chain is ATP-dependent (S)-NAD(P)H-hydrate dehydratase (343 aa).

Residues Met-1–Ala-42 constitute a mitochondrion transit peptide. Positions Leu-49–Leu-340 constitute a YjeF C-terminal domain. The residue at position 63 (Lys-63) is an N6-acetyllysine. Tyr-81 is modified (phosphotyrosine). (6S)-NADPHX is bound by residues Gly-149 and Asn-202–Arg-208. ATP contacts are provided by residues Lys-242–Asp-246 and Gly-261–Gly-270. Asp-271 provides a ligand contact to (6S)-NADPHX.

It belongs to the NnrD/CARKD family. Mg(2+) serves as cofactor.

The protein resides in the mitochondrion. It catalyses the reaction (6S)-NADHX + ATP = ADP + phosphate + NADH + H(+). The catalysed reaction is (6S)-NADPHX + ATP = ADP + phosphate + NADPH + H(+). Catalyzes the dehydration of the S-form of NAD(P)HX at the expense of ATP, which is converted to ADP. Together with NAD(P)HX epimerase, which catalyzes the epimerization of the S- and R-forms, the enzyme allows the repair of both epimers of NAD(P)HX, a damaged form of NAD(P)H that is a result of enzymatic or heat-dependent hydration. This is ATP-dependent (S)-NAD(P)H-hydrate dehydratase from Rattus norvegicus (Rat).